The following is a 115-amino-acid chain: U3-lycotoxin-Ls1k (115 aa).

Positions 1 to 20 are cleaved as a signal peptide; it reads MKFVLLFGVLVVTLFSYSSA. A propeptide spanning residues 21–44 is cleaved from the precursor; sequence EMLDDFDQADEDELLSLIEKEEAR. 4 disulfide bridges follow: Cys-48/Cys-63, Cys-55/Cys-72, Cys-62/Cys-87, and Cys-74/Cys-85.

Belongs to the neurotoxin 19 (CSTX) family. 01 subfamily. Expressed by the venom gland.

The protein resides in the secreted. The protein is U3-lycotoxin-Ls1k of Lycosa singoriensis (Wolf spider).